The chain runs to 838 residues: Phosphatidylethanolamine N-methyltransferase 1 (838 aa).

Residues 1–48 are Lumenal-facing; sequence MATEIITEKKEIVARTRSSGITFNPPVTHDMVRSLFDPTIKKSFLECC. Residues 49 to 69 traverse the membrane as a helical segment; it reads ITLTILANFVLCYYLINWFGL. The Cytoplasmic segment spans residues 70–73; that stretch reads SQAK. The chain crosses the membrane as a helical span at residues 74–94; the sequence is LIFLIQYVYWRLAYNLGIGII. The Lumenal segment spans residues 95–157; sequence LHYQSHYESL…ELNCWLLFRQ (63 aa). Residues 158 to 178 form a helical membrane-spanning segment; sequence FVDLILMQDFTTYIIYVYLSL. The Cytoplasmic segment spans residues 179 to 184; that stretch reads PTDVSS. Residues 185-205 traverse the membrane as a helical segment; that stretch reads LINWKSLIGIAMILFNIWVKI. Over 206-236 the chain is Lumenal; the sequence is DAHRVVKDYAWYWGDFFFLQDAELTFDGVFN. The chain crosses the membrane as a helical span at residues 237–257; it reads ISPHPMYSIGYLGYYGLSLIC. Residues 258-261 are Cytoplasmic-facing; the sequence is GDYR. A helical membrane pass occupies residues 262–282; that stretch reads VLLVSVGGHFLQFLFLKYVES. Residues 283 to 328 are Lumenal-facing; the sequence is PHIERTYGSDSPSNSTQHQIDDLIAKENYDYSRPLINTGILFENFQ. A helical membrane pass occupies residues 329–349; that stretch reads FLRFSDYFTVSTILVLFSWFF. Residues 350–356 lie on the Cytoplasmic side of the membrane; the sequence is TSKPSNN. The helical transmembrane segment at 357–377 threads the bilayer; sequence FLFVLTLLTKLTTWLLTSWIL. Over 378-403 the chain is Lumenal; that stretch reads FQQSNRKWFTRLFLKNGYTQIYSYQQ. A helical membrane pass occupies residues 404 to 424; that stretch reads WQFLYNYSLIVTNTLLFLHTL. The Cytoplasmic segment spans residues 425 to 435; sequence SELYSIQSSDG. A helical membrane pass occupies residues 436–456; the sequence is LNNSHVIFGLLLCAIQIWCNV. Over 457 to 517 the chain is Lumenal; that stretch reads ETRDAISDFG…VLMTNFSKTN (61 aa). The helical transmembrane segment at 518 to 538 threads the bilayer; the sequence is VTLAVLWTVTNLIFVKLIEEP. The Cytoplasmic segment spans residues 539–838; that stretch reads HVSKVYGNGT…DIKEVLDSLN (300 aa).

The protein belongs to the class VI-like SAM-binding methyltransferase superfamily. CHO2 family.

Its subcellular location is the endoplasmic reticulum membrane. It carries out the reaction a 1,2-diacyl-sn-glycero-3-phosphoethanolamine + S-adenosyl-L-methionine = a 1,2-diacyl-sn-glycero-3-phospho-N-methylethanolamine + S-adenosyl-L-homocysteine + H(+). Its pathway is phospholipid metabolism; phosphatidylcholine biosynthesis. Functionally, catalyzes the first step of the methylation pathway of phosphatidylcholine biosynthesis, the SAM-dependent methylation of phosphatidylethanolamine (PE) to phosphatidylmonomethylethanolamine (PMME). The sequence is that of Phosphatidylethanolamine N-methyltransferase 1 (CHO2-1) from Vanderwaltozyma polyspora (strain ATCC 22028 / DSM 70294 / BCRC 21397 / CBS 2163 / NBRC 10782 / NRRL Y-8283 / UCD 57-17) (Kluyveromyces polysporus).